We begin with the raw amino-acid sequence, 335 residues long: MPKLDSKKEKYLKQIVENFIKTGESIGSLNLKQSYGIKKSPSYLRAIMNQLEKEGFLEKSHSSSGRIPTLQGFQYYAEFLSFDENENLANKLKDLFARRRINIENTISEAVKLISESVGTTLIATTNNENERLMSINLTQISQNEGIIVVVSSSGNVENKKITFSEQIPRQDVKIAIRLFQERLINTPLLEISSKLAILKQELEKQIKHSDELLHHFMEKIFNFQVQNKSNIYNKNSLILDKEISRAKLVDLLYIIEKKSIWEMLEDRTTKDDDTLKISIKSPEVSFISKKFEKFLPIKEISMVGAAKKINYSAARTGIKLLEDFLSNKSKIRKG.

The protein belongs to the HrcA family.

Functionally, negative regulator of class I heat shock genes (grpE-dnaK-dnaJ and groELS operons). Prevents heat-shock induction of these operons. This Mesomycoplasma hyopneumoniae (strain 232) (Mycoplasma hyopneumoniae) protein is Heat-inducible transcription repressor HrcA.